A 159-amino-acid polypeptide reads, in one-letter code: Probable carbonic anhydrase (159 aa).

Substrate-binding positions include 33-35 and 48-49; these read RGD and QD. Zn(2+) is bound by residues His-54, His-71, and His-76.

It belongs to the gamma-class carbonic anhydrase family. The cofactor is Zn(2+).

The catalysed reaction is hydrogencarbonate + H(+) = CO2 + H2O. Probably reversibly hydrates carbon dioxide. The polypeptide is Probable carbonic anhydrase (Methanocaldococcus jannaschii (strain ATCC 43067 / DSM 2661 / JAL-1 / JCM 10045 / NBRC 100440) (Methanococcus jannaschii)).